A 361-amino-acid polypeptide reads, in one-letter code: Hydroxycarboxylate dehydrogenase B (361 aa).

Residues His-48, 122–124 (GRI), 178–182 (LLDYA), His-234, Asn-270, and 313–316 (GEWE) each bind NAD(+).

This sequence belongs to the LDH2/MDH2 oxidoreductase family.

The catalysed reaction is 2-hydroxyglutarate + NADP(+) = 2-oxoglutarate + NADPH + H(+). It catalyses the reaction 2-hydroxyglutarate + NAD(+) = 2-oxoglutarate + NADH + H(+). The enzyme catalyses 3-phenyllactate + NADP(+) = 3-phenylpyruvate + NADPH + H(+). It carries out the reaction 3-phenyllactate + NAD(+) = 3-phenylpyruvate + NADH + H(+). The catalysed reaction is (2R)-2-hydroxy-3-(4-hydroxyphenyl)propanoate + NAD(+) = 3-(4-hydroxyphenyl)pyruvate + NADH + H(+). It catalyses the reaction (2R)-2-hydroxy-3-(4-hydroxyphenyl)propanoate + NADP(+) = 3-(4-hydroxyphenyl)pyruvate + NADPH + H(+). The enzyme catalyses (2R)-3-(3,4-dihydroxyphenyl)lactate + NADP(+) = 3-(3,4-dihydroxyphenyl)pyruvate + NADPH + H(+). It carries out the reaction (2R)-3-(3,4-dihydroxyphenyl)lactate + NAD(+) = 3-(3,4-dihydroxyphenyl)pyruvate + NADH + H(+). Catalyzes the NAD(P)H-dependent reduction of 2-oxoglutarate, phenylpyruvate and (4-hydroxyphenyl)pyruvate, leading to the respective 2-hydroxycarboxylate in vitro. Shows a preference for NADPH over NADH as a redox partner. Do not catalyze the reverse reactions. This is Hydroxycarboxylate dehydrogenase B from Escherichia coli O157:H7.